A 141-amino-acid chain; its full sequence is uncharacterized protein (141 aa).

This is an uncharacterized protein from Borreliella burgdorferi (strain ATCC 35210 / DSM 4680 / CIP 102532 / B31) (Borrelia burgdorferi).